Reading from the N-terminus, the 511-residue chain is ATP synthase subunit alpha (511 aa).

169–176 (GDRQTGKT) serves as a coordination point for ATP.

It belongs to the ATPase alpha/beta chains family. As to quaternary structure, F-type ATPases have 2 components, CF(1) - the catalytic core - and CF(0) - the membrane proton channel. CF(1) has five subunits: alpha(3), beta(3), gamma(1), delta(1), epsilon(1). CF(0) has three main subunits: a(1), b(2) and c(9-12). The alpha and beta chains form an alternating ring which encloses part of the gamma chain. CF(1) is attached to CF(0) by a central stalk formed by the gamma and epsilon chains, while a peripheral stalk is formed by the delta and b chains.

Its subcellular location is the cell inner membrane. It catalyses the reaction ATP + H2O + 4 H(+)(in) = ADP + phosphate + 5 H(+)(out). Its function is as follows. Produces ATP from ADP in the presence of a proton gradient across the membrane. The alpha chain is a regulatory subunit. In Bartonella quintana (strain Toulouse) (Rochalimaea quintana), this protein is ATP synthase subunit alpha.